The primary structure comprises 553 residues: Chaperonin GroEL (553 aa).

ATP is bound by residues 30 to 33 (TLGP), lysine 51, 87 to 91 (DGTTT), glycine 416, and aspartate 496.

Belongs to the chaperonin (HSP60) family. Forms a cylinder of 14 subunits composed of two heptameric rings stacked back-to-back. Interacts with the co-chaperonin GroES.

The protein resides in the cytoplasm. It carries out the reaction ATP + H2O + a folded polypeptide = ADP + phosphate + an unfolded polypeptide.. In terms of biological role, together with its co-chaperonin GroES, plays an essential role in assisting protein folding. The GroEL-GroES system forms a nano-cage that allows encapsulation of the non-native substrate proteins and provides a physical environment optimized to promote and accelerate protein folding. In Alkalilimnicola ehrlichii (strain ATCC BAA-1101 / DSM 17681 / MLHE-1), this protein is Chaperonin GroEL.